We begin with the raw amino-acid sequence, 1818 residues long: Protein encore (1818 aa).

Disordered stretches follow at residues Ala47 to Gly68, Ser123 to Asn282, and Ala317 to Ser413. Positions Val52–Val66 are enriched in gly residues. Polar residues predominate over residues Ala124 to Gly137. Over residues Gly141–His152 the composition is skewed to basic residues. 4 stretches are compositionally biased toward low complexity: residues Glu156–Gly179, Asn186–Ala199, Gln217–Val233, and Asn266–Asn282. 2 positions are modified to phosphoserine: Ser267 and Ser270. Basic and acidic residues predominate over residues Ala317–Met328. A Phosphoserine modification is found at Ser336. The span at Asn338–Pro348 shows a compositional bias: basic and acidic residues. 2 stretches are compositionally biased toward low complexity: residues Asn372 to Ile381 and Asn391 to Gly410. The R3H domain maps to Arg444–Asn508. The SUZ domain occupies Arg510–Gly576. Ser535 carries the post-translational modification Phosphoserine. The segment covering Phe557–Arg568 has biased composition (basic and acidic residues). Disordered stretches follow at residues Phe557 to Gln806, Gln885 to Pro916, Pro936 to Lys959, Gly1176 to Ser1249, Ala1332 to His1648, and Gly1684 to Ile1709. The segment covering Tyr592–Gln606 has biased composition (low complexity). Over residues Asn644–Gly655 the composition is skewed to gly residues. Residues Gln678 to Ser695 show a composition bias toward polar residues. Over residues Ser713–Gln771 the composition is skewed to low complexity. Polar residues predominate over residues Tyr772–Ser784. The segment covering Ala893 to Ser904 has biased composition (low complexity). The span at Gly1176–Thr1197 shows a compositional bias: low complexity. Residues Ser1220 to Tyr1231 are compositionally biased toward polar residues. The segment covering Ala1381–Pro1392 has biased composition (low complexity). Residues Thr1430–Tyr1443 show a composition bias toward polar residues. Over residues Ala1503–Ser1521 the composition is skewed to low complexity. 2 stretches are compositionally biased toward polar residues: residues Ala1554–Glu1565 and Phe1579–Arg1596. Positions Ser1608–Ala1633 are enriched in low complexity. The segment covering Gly1684 to Ala1705 has biased composition (gly residues).

As to quaternary structure, interacts with hfp; however, given the nuclear localization of hfp, the relevance of such interaction is unclear. Interacts with CycE, Cul1, and the SCF-proteasome complex. In terms of tissue distribution, expressed in all germline cells of the germarium including the stem cells and dividing cystocytes.

Its subcellular location is the cytoplasm. Its function is as follows. Required for the regulation of germline mitosis, karyosome formation, and establishment of dorsoventral (DS) polarity of the egg and embryo. Involved in proper grk mRNA localization and translation in the oocyte. May control germline mitosis by facilitating the cyclin E (CycE) proteolysis by the SCF-ubiquitin-proteasome complex. The chain is Protein encore (enc) from Drosophila melanogaster (Fruit fly).